A 337-amino-acid polypeptide reads, in one-letter code: Glucan endo-1,3-beta-glucosidase, basic isoform 1 (337 aa).

The Proton donor role is filled by Glu94. Glu239 serves as the catalytic Nucleophile. Positions 315–337 (VSERVWDISAETNSTASSLISEM) are cleaved as a propeptide — removed in mature form. An N-linked (GlcNAc...) asparagine glycan is attached at Asn327.

It belongs to the glycosyl hydrolase 17 family.

Its subcellular location is the vacuole. It carries out the reaction Hydrolysis of (1-&gt;3)-beta-D-glucosidic linkages in (1-&gt;3)-beta-D-glucans.. Functionally, is thought to be an important plant defense-related product against fungal pathogens. The protein is Glucan endo-1,3-beta-glucosidase, basic isoform 1 (GLUB1) of Solanum tuberosum (Potato).